Consider the following 1070-residue polypeptide: MLGDGNAGMSTIPGLNQIQFEGFCRFIDQGLTEELYKFPKIEDTDQEIEFQLFVETYQLVEPLLKERDAVYESFTYSSELYVSAGLIWKSRGDMQEQTIFIGNIPLMNSLGTSIVNGIYRIVINQILQSPGIYYRSELGHNGISVYTGTIISDWGGRFELEIDRKARIWARVSRKQKVSILVLSAAMGSNLREILENICYPEIFLSFLTNKEKKKIGSKENAILEFYQQFACVGGDPVFSESLCKELQKKFFHQRCELGKIGRRNMNQRLNLNIPQNNTFLLPRDVLAAVDHLIGLKFGMGTLDDMNHLKNKRIRSVANLLQDQFGLALVRLENVIRGTICGAIRHKLMPTPQNLVTSTPLTTTYDSFFGLHPLSQVLDRTNPLTQIVHGRKLSYLGPGGLTGRTASFRVRDIHPSHYGRICPIDTSEGINVGLIGSLAIHARIGYWGSLESPFYEIFEKSKKVRMLYLSPSRDEYYMVAAGNSLALNQGSPEEQVVPTRYRQEFLTIAWEQVHLRSIFPFQYFSIGASLIPFIEHNDANRALMSSNMQRQAVPLVRSEKCIVGTGLEPQVALDSGVPAIAEHEGKIIYTDIDKIVLSGNGNTYSIPLIMYQRSNKNTCMHQKPQVGRGKCIKKGQVLADGAATVGGELALGKNILVAYMPWEGYNFEDAVLISERLIYRDIYTSFHIRKYEIQTHVTSQGPERITNEIPHLEARLLRNLDKNGIVMLGSWVETGDILVGKLTPQAAKESSYAPEDRLLRAILGIQVSTSKETCLKLPIGGRGRVIDVRWVQKKGGSSYNPETICVYISQKREIKVGDKVAGRHGNKGIVSKILPRQDMPYLQDGRPVDMVFNPLGVPSRMNVGQIFECSLGLAGGLLNRHYRIAPFDERYEQEASRKLVFSELYEASKQTANPWVFEPEYPGKSRIFDGRTGDPFEEPVLIGKPYILKLIHQVDDKVHGRSSGHYALVTQQPLRGRSKQGGQRVGEMEVWALEGFGVAHILQEMLTYKSDHIRARQEVLGTTIIGETIPNPEDAPESFRLLVRELRSLALELNHFVVSEKNFQINKKEA.

It belongs to the RNA polymerase beta chain family. As to quaternary structure, in plastids the minimal PEP RNA polymerase catalytic core is composed of four subunits: alpha, beta, beta', and beta''. When a (nuclear-encoded) sigma factor is associated with the core the holoenzyme is formed, which can initiate transcription.

Its subcellular location is the plastid. The protein resides in the chloroplast. The catalysed reaction is RNA(n) + a ribonucleoside 5'-triphosphate = RNA(n+1) + diphosphate. Functionally, DNA-dependent RNA polymerase catalyzes the transcription of DNA into RNA using the four ribonucleoside triphosphates as substrates. This is DNA-directed RNA polymerase subunit beta from Citrus sinensis (Sweet orange).